The sequence spans 90 residues: MAEKFNLQDRFLNHLRVNKIEVKVYLVNGFQTKGFIRSFDSYTVLLESGNQQSLIYKHAISTIIPSSYVMLMPRKQETAQEAETSENEGS.

The 61-residue stretch at 9–69 (DRFLNHLRVN…ISTIIPSSYV (61 aa)) folds into the Sm domain.

The protein belongs to the Hfq family. As to quaternary structure, homohexamer.

Functionally, RNA chaperone that binds small regulatory RNA (sRNAs) and mRNAs to facilitate mRNA translational regulation in response to envelope stress, environmental stress and changes in metabolite concentrations. Also binds with high specificity to tRNAs. This is RNA-binding protein Hfq from Thermotoga petrophila (strain ATCC BAA-488 / DSM 13995 / JCM 10881 / RKU-1).